Here is a 308-residue protein sequence, read N- to C-terminus: Cilia- and flagella-associated protein 73 (308 aa).

Coiled-coil stretches lie at residues 103–134 (RIQK…LEKN) and 164–227 (LSAT…QEAK).

It belongs to the CFAP73 family. As to quaternary structure, interacts with FAP100; form the modifier of inner arm (MIA) complex.

The protein resides in the cytoplasm. Its subcellular location is the cytoskeleton. The protein localises to the flagellum axoneme. In terms of biological role, as part of MIA, a complex associated with the outer doublet microtubules of the axoneme, may play a role in ciliary/flagellar motility by regulating the assembly and the activity of inner dynein arm. The protein is Cilia- and flagella-associated protein 73 of Chlamydomonas reinhardtii (Chlamydomonas smithii).